We begin with the raw amino-acid sequence, 174 residues long: I-Kappa-B like protein C1 (174 aa).

2 ANK repeats span residues 56–88 and 93–123; these read RGRQ…DINA and TGNS…NLGA.

This sequence belongs to the polydnaviridae I-Kappa-B-like protein family.

Its function is as follows. Suppresses the host immune response through NF-kappa-B inactivation. Possesses ankyrin repeat domains required for NF-kappa-B binding but lacks the regulatory regions required for dissociation from NF-kappa-B and degradation. Therefore, prevents host NF-kappa-B release and subsequent activation. The protein is I-Kappa-B like protein C1 (C1) of Microplitis demolitor bracovirus (isolate Webb) (MdBV).